Consider the following 403-residue polypeptide: Argininosuccinate synthase (403 aa).

Residues Ala10 to Ser18 and Ala37 contribute to the ATP site. L-citrulline contacts are provided by Tyr88 and Ser93. Residue Gly118 coordinates ATP. The L-aspartate site is built by Thr120, Asn124, and Asp125. Position 124 (Asn124) interacts with L-citrulline. Residues Arg128, Ser178, Ser187, Glu263, and Tyr275 each contribute to the L-citrulline site.

This sequence belongs to the argininosuccinate synthase family. Type 1 subfamily. In terms of assembly, homotetramer.

Its subcellular location is the cytoplasm. It catalyses the reaction L-citrulline + L-aspartate + ATP = 2-(N(omega)-L-arginino)succinate + AMP + diphosphate + H(+). Its pathway is amino-acid biosynthesis; L-arginine biosynthesis; L-arginine from L-ornithine and carbamoyl phosphate: step 2/3. The polypeptide is Argininosuccinate synthase (Marinobacter nauticus (strain ATCC 700491 / DSM 11845 / VT8) (Marinobacter aquaeolei)).